A 238-amino-acid polypeptide reads, in one-letter code: DnaA regulatory inactivator Hda (238 aa).

Belongs to the DnaA family. HdA subfamily. The active form seems to be an ADP-bound monomer. Forms the RIDA complex (regulatory inactivation of DnaA) of ATP-DnaA, ADP-Hda and the DNA-loaded beta sliding clamp (dnaN).

Its function is as follows. Mediates the interaction of DNA replication initiator protein DnaA with DNA polymerase subunit beta sliding clamp (dnaN). Stimulates hydrolysis of ATP-DnaA to ADP-DnaA, rendering DnaA inactive for reinitiation, a process called regulatory inhibition of DnaA or RIDA. This chain is DnaA regulatory inactivator Hda, found in Pectobacterium atrosepticum (strain SCRI 1043 / ATCC BAA-672) (Erwinia carotovora subsp. atroseptica).